Reading from the N-terminus, the 87-residue chain is Scorpine-like peptide Tco 41.46-2 (87 aa).

A signal peptide spans 1–19; it reads MERKLALLLFLGMVTLASC. Positions 53-87 constitute a BetaSPN-type CS-alpha/beta domain; it reads QFGCPAYEGYCNNHCQDIERKDGECHGFKCKCAKD. Disulfide bonds link Cys-56–Cys-77, Cys-63–Cys-82, and Cys-67–Cys-84.

This sequence belongs to the long chain scorpion toxin family. Class 1 subfamily. As to expression, expressed by the venom gland.

It is found in the secreted. Functionally, may have antibacterial activity. In terms of biological role, inhibits voltage-gated potassium channel. Its function is as follows. Does not induce hemolytic activity, lactate dehydrogenase (LDH) release from mast cells, mast cell degranulation, and antimicrobial effects. In vivo, injection into mice causes moderate edema formation, but induces very weak or no change in nociceptive sensibility. It also reduces mice locomotion, suggesting an increase in anxiety, but causes no alteration in rearing (standing on hind limbs). The sequence is that of Scorpine-like peptide Tco 41.46-2 from Tityus costatus (Brazilian scorpion).